Consider the following 413-residue polypeptide: Multifunctional CCA protein (413 aa).

Glycine 8 and arginine 11 together coordinate ATP. CTP contacts are provided by glycine 8 and arginine 11. Mg(2+) is bound by residues aspartate 21 and aspartate 23. Residues arginine 91, arginine 143, and arginine 146 each contribute to the ATP site. Arginine 91, arginine 143, and arginine 146 together coordinate CTP. One can recognise an HD domain in the interval 232 to 333 (TGVHVMMVVD…VRLFERSDAL (102 aa)).

It belongs to the tRNA nucleotidyltransferase/poly(A) polymerase family. Bacterial CCA-adding enzyme type 1 subfamily. Monomer. Can also form homodimers and oligomers. Requires Mg(2+) as cofactor. Ni(2+) is required as a cofactor.

The catalysed reaction is a tRNA precursor + 2 CTP + ATP = a tRNA with a 3' CCA end + 3 diphosphate. It catalyses the reaction a tRNA with a 3' CCA end + 2 CTP + ATP = a tRNA with a 3' CCACCA end + 3 diphosphate. Catalyzes the addition and repair of the essential 3'-terminal CCA sequence in tRNAs without using a nucleic acid template. Adds these three nucleotides in the order of C, C, and A to the tRNA nucleotide-73, using CTP and ATP as substrates and producing inorganic pyrophosphate. tRNA 3'-terminal CCA addition is required both for tRNA processing and repair. Also involved in tRNA surveillance by mediating tandem CCA addition to generate a CCACCA at the 3' terminus of unstable tRNAs. While stable tRNAs receive only 3'-terminal CCA, unstable tRNAs are marked with CCACCA and rapidly degraded. This is Multifunctional CCA protein from Burkholderia vietnamiensis (strain G4 / LMG 22486) (Burkholderia cepacia (strain R1808)).